We begin with the raw amino-acid sequence, 296 residues long: Formamidopyrimidine-DNA glycosylase (296 aa).

Pro-2 acts as the Schiff-base intermediate with DNA in catalysis. Glu-3 (proton donor) is an active-site residue. The active-site Proton donor; for beta-elimination activity is the Lys-61. Residues His-104, Arg-128, and Lys-174 each contribute to the DNA site. The segment at 260–294 (HAYGQQGQACDRCGSNIIREKFANRSSHFCPRCQL) adopts an FPG-type zinc-finger fold. Arg-284 functions as the Proton donor; for delta-elimination activity in the catalytic mechanism.

This sequence belongs to the FPG family. Monomer. Requires Zn(2+) as cofactor.

The catalysed reaction is Hydrolysis of DNA containing ring-opened 7-methylguanine residues, releasing 2,6-diamino-4-hydroxy-5-(N-methyl)formamidopyrimidine.. It catalyses the reaction 2'-deoxyribonucleotide-(2'-deoxyribose 5'-phosphate)-2'-deoxyribonucleotide-DNA = a 3'-end 2'-deoxyribonucleotide-(2,3-dehydro-2,3-deoxyribose 5'-phosphate)-DNA + a 5'-end 5'-phospho-2'-deoxyribonucleoside-DNA + H(+). In terms of biological role, involved in base excision repair of DNA damaged by oxidation or by mutagenic agents. Acts as a DNA glycosylase that recognizes and removes damaged bases. Has a preference for oxidized purines, such as 7,8-dihydro-8-oxoguanine (8-oxoG). Has AP (apurinic/apyrimidinic) lyase activity and introduces nicks in the DNA strand. Cleaves the DNA backbone by beta-delta elimination to generate a single-strand break at the site of the removed base with both 3'- and 5'-phosphates. The sequence is that of Formamidopyrimidine-DNA glycosylase from Corynebacterium diphtheriae (strain ATCC 700971 / NCTC 13129 / Biotype gravis).